A 379-amino-acid chain; its full sequence is GDP-mannose transporter 1 (379 aa).

Residues 1–39 are Cytoplasmic-facing; the sequence is MTDNRKPEDYTIEMDKLGQNKNYQAPPPPPQPRSSTASS. Positions 17 to 38 are disordered; sequence LGQNKNYQAPPPPPQPRSSTAS. The chain crosses the membrane as a helical span at residues 40 to 60; sequence ISNNAALSVLAYCGSSILMTV. Residues 61–69 lie on the Lumenal side of the membrane; it reads MNKYVLSSD. Residues 70 to 90 traverse the membrane as a helical segment; it reads FNLNFFLLCVQSLVCIIAIQL. Residues 91–110 are Cytoplasmic-facing; the sequence is CKACGLITYRDFNLDEARKW. A helical transmembrane segment spans residues 111–133; that stretch reads FPITLLLIGMIYTGSKALQFLSI. Over 134-136 the chain is Lumenal; that stretch reads PVY. The helical transmembrane segment at 137-156 threads the bilayer; the sequence is TIFKNLTIILIAYGEVLWFG. Residues 157–162 lie on the Cytoplasmic side of the membrane; that stretch reads GSVTNL. A helical transmembrane segment spans residues 163-182; it reads TLFSFGLMVFSSIIAAWADI. Residues 183–198 lie on the Lumenal side of the membrane; it reads KHAIESSGDATSKVST. The helical transmembrane segment at 199–219 threads the bilayer; the sequence is LNAGYIWMLINCLCTSSYVLG. The Cytoplasmic portion of the chain corresponds to 220–233; sequence MRKRIKLTNFKDFD. A helical transmembrane segment spans residues 234-254; the sequence is TMFYNNLLSIPVLIVCSGILE. The Lumenal segment spans residues 255–272; it reads DWSPANVARNFPSADRNG. Residues 273–293 traverse the membrane as a helical segment; sequence IMFAMILSGLSTVFISYTSAW. The Cytoplasmic portion of the chain corresponds to 294 to 301; the sequence is CVRVTSST. The chain crosses the membrane as a helical span at residues 302 to 322; the sequence is TYSMVGALNKLPIALSGLIFF. Residues 323–325 lie on the Lumenal side of the membrane; that stretch reads DAP. The chain crosses the membrane as a helical span at residues 326 to 346; the sequence is VTFPSVSAIMVGFVSGIVYAV. At 347 to 379 the chain is on the cytoplasmic side; the sequence is AKIKQNAKPKVGILPTTNPVSASSQSMRDSLRS.

Belongs to the TPT transporter family. SLC35D subfamily. Homooligomer.

It is found in the golgi apparatus membrane. Its subcellular location is the cytoplasmic vesicle membrane. It localises to the endoplasmic reticulum membrane. In terms of biological role, involved in the import of GDP-mannose from the cytoplasm into the Golgi lumen. The chain is GDP-mannose transporter 1 (gmt1) from Emericella nidulans (strain FGSC A4 / ATCC 38163 / CBS 112.46 / NRRL 194 / M139) (Aspergillus nidulans).